Consider the following 159-residue polypeptide: Testis-specific XK-related protein, Y-linked (159 aa).

3 helical membrane-spanning segments follow: residues 1–21, 45–65, and 72–92; these read MFIFNSIADDIFPLISCVGAI, IYLMIWHSLVIISPVVTLAFF, and GSLHFLLIIYFVLLLTPWLEF.

This sequence belongs to the XK family. In terms of tissue distribution, testis specific.

Its subcellular location is the membrane. The chain is Testis-specific XK-related protein, Y-linked (XKRY) from Homo sapiens (Human).